Reading from the N-terminus, the 137-residue chain is MKKWIVLFLVLIAAAISIFVYVSTGSEKPFYNDINLTQYQKEVDSKKPKFIYVYETSCPPCQEIKPELNEVIKKEKLKVQALNIEEKENYNTEFLDKYNLNKTPTILYYKDGKEKDRLEGYRSASQIEKFFDKNGDR.

The signal sequence occupies residues 1-25 (MKKWIVLFLVLIAAAISIFVYVSTG). The region spanning 26-136 (SEKPFYNDIN…IEKFFDKNGD (111 aa)) is the Thioredoxin domain. C58 and C61 are oxidised to a cystine.

Belongs to the thioredoxin family.

The protein resides in the secreted. In terms of biological role, unknown; dispensable for production of the lantibiotic sublancin 168 and for competence for DNA uptake. In Bacillus subtilis (strain 168), this protein is SPbeta prophage-derived disulfide bond formation protein A (bdbA).